Here is a 326-residue protein sequence, read N- to C-terminus: DnaJ homolog subfamily B member 6 (326 aa).

One can recognise a J domain in the interval 2–69 (VDYYEVLGVQ…KKRDIYDKYG (68 aa)). The segment at 2-146 (VDYYEVLGVQ…TGSFFSAFSG (145 aa)) is interaction with HSP70. An interaction with KRT18 region spans residues 119 to 242 (FEDFFGNRRG…ADDDALAEER (124 aa)). The residue at position 135 (R135) is an Omega-N-methylarginine. The interval 249-326 (ALPAQPAGLR…KKKKSTKGNH (78 aa)) is disordered. A Phosphoserine modification is found at S277.

As to quaternary structure, homooligomer. Interacts with BAG3, HSPB8 and STUB1. Interacts with ALKBH1. Interacts with HSP70, KRT18 and PTTG.

It localises to the cytoplasm. It is found in the perinuclear region. The protein localises to the nucleus. The protein resides in the myofibril. Its subcellular location is the sarcomere. It localises to the z line. In terms of biological role, has a stimulatory effect on the ATPase activity of HSP70 in a dose-dependent and time-dependent manner and hence acts as a co-chaperone of HSP70. Plays an indispensable role in the organization of KRT8/KRT18 filaments. Acts as an endogenous molecular chaperone for neuronal proteins including huntingtin. Suppresses aggregation and toxicity of polyglutamine-containing, aggregation-prone proteins. Also reduces cellular toxicity and caspase-3 activity. The protein is DnaJ homolog subfamily B member 6 (DNAJB6) of Pongo abelii (Sumatran orangutan).